We begin with the raw amino-acid sequence, 287 residues long: Polyamine aminopropyltransferase (287 aa).

The 234-residue stretch at 5 to 238 (ETWHETLHDH…GIMTFAWASQ (234 aa)) folds into the PABS domain. Gln-33 contributes to the S-methyl-5'-thioadenosine binding site. His-64 and Asp-88 together coordinate spermidine. S-methyl-5'-thioadenosine contacts are provided by residues Glu-108 and 140-141 (DG). The Proton acceptor role is filled by Asp-158. 158–161 (DCTD) provides a ligand contact to spermidine. Pro-165 contributes to the S-methyl-5'-thioadenosine binding site.

This sequence belongs to the spermidine/spermine synthase family. Homodimer or homotetramer.

The protein localises to the cytoplasm. It carries out the reaction S-adenosyl 3-(methylsulfanyl)propylamine + putrescine = S-methyl-5'-thioadenosine + spermidine + H(+). It functions in the pathway amine and polyamine biosynthesis; spermidine biosynthesis; spermidine from putrescine: step 1/1. Functionally, catalyzes the irreversible transfer of a propylamine group from the amino donor S-adenosylmethioninamine (decarboxy-AdoMet) to putrescine (1,4-diaminobutane) to yield spermidine. The polypeptide is Polyamine aminopropyltransferase (Sodalis glossinidius (strain morsitans)).